We begin with the raw amino-acid sequence, 563 residues long: Src substrate protein p85 (563 aa).

6 Cortactin repeats span residues 89–125 (ASHG…SQVD), 126–162 (SVKG…SQKD), 163–199 (YSSG…SQKD), 200–236 (YSKG…SQKD), 237–273 (YVKG…SQKD), and 274–310 (YKSG…SQQD). The Cortactin 7; truncated repeat unit spans residues 311–333 (YSKGFGGKYGVQKDRMDKNAATF). A disordered region spans residues 331 to 477 (ATFEDIEKPT…EAVSQREAEY (147 aa)). Positions 349 to 410 (VERVANKTSS…EEQAKAKKQT (62 aa)) form a coiled coil. Over residues 366–405 (LAKEKEQEDRRKAEAERAQRMAREKQEQEEARRKLEEQAK) the composition is skewed to basic and acidic residues. The region spanning 505–563 (ELGITAIALYDYQAAGDDEISFDPDDIITNIEMIDDGWWRGVCKGRYGLFPANYVELRQ) is the SH3 domain.

In terms of processing, acetylated. Post-translationally, in normal cells, appears to be phosphorylated on serine and threonine; in cells expressing activated forms of pp60-src, they become heavily phosphorylated on tyrosine in vitro. Tyrosine phosphorylation in transformed cells may contribute to cellular growth regulation and transformation.

Its subcellular location is the cytoplasm. The protein resides in the cytoskeleton. It localises to the cell projection. The protein localises to the lamellipodium. It is found in the ruffle. Its subcellular location is the dendrite. The protein resides in the cell membrane. It localises to the podosome. The protein localises to the cell junction. It is found in the focal adhesion. Its subcellular location is the membrane. The protein resides in the clathrin-coated pit. It localises to the dendritic spine. The protein localises to the cell cortex. It is found in the endoplasmic reticulum. In terms of biological role, contributes to the organization of the actin cytoskeleton and cell shape. Plays a role in the formation of lamellipodia and in cell migration. Plays a role in the regulation of neuron morphology, axon growth and formation of neuronal growth cones, and may play a role in the regulation of neuronal spine density. Plays a role in focal adhesion assembly and turnover. Plays a role in intracellular protein transport and endocytosis, and in modulating the levels of potassium channels present at the cell membrane. Plays a role in endocytosis via clathrin-coated pits. In Gallus gallus (Chicken), this protein is Src substrate protein p85 (CTTN1).